The primary structure comprises 345 residues: Probable dual-specificity RNA methyltransferase RlmN (345 aa).

The active-site Proton acceptor is E90. A Radical SAM core domain is found at Y96 to D326. A disulfide bridge connects residues C103 and C331. C110, C114, and C117 together coordinate [4Fe-4S] cluster. S-adenosyl-L-methionine-binding positions include G157–E158, S189, S212–H214, and N288. C331 serves as the catalytic S-methylcysteine intermediate.

The protein belongs to the radical SAM superfamily. RlmN family. [4Fe-4S] cluster serves as cofactor.

It is found in the cytoplasm. It catalyses the reaction adenosine(2503) in 23S rRNA + 2 reduced [2Fe-2S]-[ferredoxin] + 2 S-adenosyl-L-methionine = 2-methyladenosine(2503) in 23S rRNA + 5'-deoxyadenosine + L-methionine + 2 oxidized [2Fe-2S]-[ferredoxin] + S-adenosyl-L-homocysteine. It carries out the reaction adenosine(37) in tRNA + 2 reduced [2Fe-2S]-[ferredoxin] + 2 S-adenosyl-L-methionine = 2-methyladenosine(37) in tRNA + 5'-deoxyadenosine + L-methionine + 2 oxidized [2Fe-2S]-[ferredoxin] + S-adenosyl-L-homocysteine. In terms of biological role, specifically methylates position 2 of adenine 2503 in 23S rRNA and position 2 of adenine 37 in tRNAs. The protein is Probable dual-specificity RNA methyltransferase RlmN of Clostridium acetobutylicum (strain ATCC 824 / DSM 792 / JCM 1419 / IAM 19013 / LMG 5710 / NBRC 13948 / NRRL B-527 / VKM B-1787 / 2291 / W).